Here is a 121-residue protein sequence, read N- to C-terminus: Type II secretion system protein I (121 aa).

Positions 1–6 are cleaved as a propeptide — leader sequence; sequence MKKQSG. An N-methylmethionine modification is found at Met-7. A helical transmembrane segment spans residues 7-27; it reads MTLIEVMVALVVFALAGLAVM.

This sequence belongs to the GSP I family. In terms of assembly, type II secretion is composed of four main components: the outer membrane complex, the inner membrane complex, the cytoplasmic secretion ATPase and the periplasm-spanning pseudopilus. Interacts with core component PulG. Cleaved by prepilin peptidase. Post-translationally, methylated by prepilin peptidase at the amino group of the N-terminal methionine once the leader sequence is cleaved by prepilin peptidase.

It localises to the cell inner membrane. Component of the type II secretion system required for the energy-dependent secretion of extracellular factors such as proteases and toxins from the periplasm. Part of the pseudopilus tip complex that is critical for the recognition and binding of secretion substrates. This Klebsiella pneumoniae protein is Type II secretion system protein I (pulI).